We begin with the raw amino-acid sequence, 734 residues long: PI-PLC X-box domain-containing protein DDB_G0293730 (734 aa).

A coiled-coil region spans residues Ile8–Lys70. Positions Lys440–Leu604 constitute a PI-PLC X-box domain.

In Dictyostelium discoideum (Social amoeba), this protein is PI-PLC X-box domain-containing protein DDB_G0293730.